Here is a 70-residue protein sequence, read N- to C-terminus: Small ribosomal subunit protein bS21 (70 aa).

Belongs to the bacterial ribosomal protein bS21 family.

The polypeptide is Small ribosomal subunit protein bS21 (Campylobacter fetus subsp. fetus (strain 82-40)).